The primary structure comprises 773 residues: Tyrosine kinase receptor Cad96Ca (773 aa).

Positions 1–48 are cleaved as a signal peptide; sequence MVYHHHNHESRIIHCRKQLTSWRRRSLLLTIIVVTATVVSLISQEAEA. Over 49–315 the chain is Extracellular; it reads HNQNAPPILY…ITIFSLKSGT (267 aa). The Cadherin domain maps to 58 to 172; sequence YVRERNWRIS…ENSSGYRPQT (115 aa). Residues N126, N164, and N180 are each glycosylated (N-linked (GlcNAc...) asparagine). Residues 196 to 302 form a disordered region; sequence SIRNGLPNSR…TPSGGHHNNS (107 aa). Positions 209 to 235 are enriched in pro residues; it reads WYPPVPQNNIFGPPPFGNNYPPPPPNI. The span at 243-253 shows a compositional bias: acidic residues; it reads SGEEEQPDEEV. 2 stretches are compositionally biased toward polar residues: residues 254–283 and 290–302; these read TPTT…STRV and ETTT…HNNS. 4 N-linked (GlcNAc...) asparagine glycosylation sites follow: N278, N279, N300, and N301. Residues 316-336 traverse the membrane as a helical segment; the sequence is IPIVVTVGGFFVAIAVLLAYL. The Cytoplasmic segment spans residues 337–773; that stretch reads CRRRLCAISR…NIVSLSGEKL (437 aa). Disordered stretches follow at residues 352–373 and 411–447; these read KEKE…LTDD and TGVT…AGSS. A compositionally biased stretch (polar residues) spans 361–373; the sequence is SNQSQLSSTLTDD. The span at 411-433 shows a compositional bias: low complexity; the sequence is TGVTNGGVSSPGVPSPGTGEPGS. The 280-residue stretch at 470 to 749 folds into the Protein kinase domain; that stretch reads LKFFNILGEG…MLDKLLHTEM (280 aa). Residues 476–484 and K504 contribute to the ATP site; that span reads LGEGAFGQV. D610 (proton acceptor) is an active-site residue.

This sequence belongs to the protein kinase superfamily. Tyr protein kinase family. Fibroblast growth factor receptor subfamily.

The protein localises to the membrane. The catalysed reaction is L-tyrosyl-[protein] + ATP = O-phospho-L-tyrosyl-[protein] + ADP + H(+). The polypeptide is Tyrosine kinase receptor Cad96Ca (Cad96Ca) (Drosophila melanogaster (Fruit fly)).